Here is a 361-residue protein sequence, read N- to C-terminus: Probable cytosolic iron-sulfur protein assembly protein 1 (361 aa).

7 WD repeats span residues 10–49 (AHSDKAWSVSAHKTVPLLATASTDKTSKIYKLSVKQNFPQ), 56–105 (THKR…TEIL), 120–160 (GHEN…EEFE), 167–206 (DHQHDIKHVVWHPHQNLLASSSYDDTIRLYKQDLDDDDWS), 213–265 (GHEG…SIKH), 280–319 (VHQYPIYSVAWSAQSGKIATVGSDGKIVIYIEGDDNSWSI), and 327–361 (HGVHEINSIIWALLDDQSEVLVTAGDDGCVNIWKP).

Belongs to the WD repeat CIA1 family. As to quaternary structure, interacts with NAR1.

Its subcellular location is the cytoplasm. It localises to the nucleus. Essential component of the cytosolic iron-sulfur (Fe/S) protein assembly machinery. Required for the maturation of extramitochondrial Fe/S proteins. This is Probable cytosolic iron-sulfur protein assembly protein 1 from Scheffersomyces stipitis (strain ATCC 58785 / CBS 6054 / NBRC 10063 / NRRL Y-11545) (Yeast).